We begin with the raw amino-acid sequence, 189 residues long: Peroxiredoxin sll1621 (189 aa).

Residues 2 to 177 (TPERVPSVVF…MLAYLKGAEA (176 aa)) enclose the Thioredoxin domain. Residue cysteine 55 is the Cysteine sulfenic acid (-SOH) intermediate (for peroxiredoxin activity) of the active site.

Belongs to the peroxiredoxin family. Prx5 subfamily. As to quaternary structure, monomer.

The catalysed reaction is a hydroperoxide + 2 glutathione = an alcohol + glutathione disulfide + H2O. Thiol-specific peroxidase that catalyzes the reduction of hydrogen peroxide and organic hydroperoxides to water and alcohols, respectively. Plays a role in cell protection against oxidative stress by detoxifying peroxides. The chain is Peroxiredoxin sll1621 from Synechocystis sp. (strain ATCC 27184 / PCC 6803 / Kazusa).